We begin with the raw amino-acid sequence, 61 residues long: MKPPMQPLTQALPFSLRDALQGTGLRVPVIKMGTGWEGMYRTLKEVAYILLCCWCIKELLD.

Preferentially expressed in the lens epithelial cells.

This Rattus norvegicus (Rat) protein is Lens epithelial cell protein LEP503 (Lenep).